Reading from the N-terminus, the 262-residue chain is Probable esterase azaC (262 aa).

Residues Ser119, Asp188, and His216 each act as charge relay system in the active site.

The protein belongs to the LovG family.

The protein operates within secondary metabolite biosynthesis. Probable esterase; part of the gene cluster that mediates the biosynthesis of azaphilones, a class of fungal metabolites characterized by a highly oxygenated pyrano-quinone bicyclic core and exhibiting a broad range of bioactivities. In the first step, the non-reducing polyketide synthase azaA forms the hexaketide precursor from successive condensations of five malonyl-CoA units, presumably with a simple acetyl-CoA starter unit. The reactive polyketide chain then undergoes a PT-mediated C2-C7 cyclization to afford the aromatic ring and is eventually released as an aldehyde through the R-domain. The putative ketoreductase azaE is proposed to catalyze the reduction of the terminal ketone resulting in the early culture product FK17-P2a. The monooxygenase azaH was demonstrated to be the only enzyme required to convert FK17-P2a to azanigerone E. AzaH first hydroxylates the benzaldehyde intermediate FK17-P2a at C4, which triggers the formation of the pyran-ring to afford azanigerone E. In parallel, the 2,4-dimethylhexanoyl chain is synthesized by the HR-PKS azaB and is proposed to be transferred to the C4-hydroxyl of azanigerone E by the acyltransferase azaD directly from the ACP domain of azaB. Alternatively, the 2,4-dimethyl-hexanoyl chain may be offloaded from the HR-PKS as a carboxylic acid and converted to an acyl-CoA by azaF. The resulting acyl-CoA molecule could then be taken up as a substrate by AzaD to form azanigerone B. To yield the carboxylic acid substituent in azanigerone A, the hydroxypropyl side chain of azanigerone B would need to undergo a C-C oxidative cleavage catalyzed by cytochrome P450 AzaI. AzaI is proposed to act on a vicinal diol that leads to a C-C bond scission either through an alkoxyradical intermediate or a peroxy complex. In the biosynthesis of azanigerone A, azanigerone B first undergoes hydroxylation at C10, possibly catalyzed by one of the two FAD-dependent monooxygenases encoded in the cluster, azaG or azaL, resulting in the vicinal diol azanigerone C. Oxidative cleavage of azanigerone C by azaI would yield the corresponding aldehyde derivative of azanigerone A. Finally, the dehydrogenase azaJ is proposed to convert the aldehyde functional group into the carboxylic acid, completing the conversion from azanigerone B to azanigerone A. Alternatively, the oxidation of aldehyde to carboxylic acid may be catalyzed by the same P450 enzyme azaI via consecutive oxidation or by endogenous alcohol dehydrogenase. This Aspergillus niger (strain ATCC 1015 / CBS 113.46 / FGSC A1144 / LSHB Ac4 / NCTC 3858a / NRRL 328 / USDA 3528.7) protein is Probable esterase azaC.